A 400-amino-acid chain; its full sequence is Beta-ketoadipyl-CoA thiolase (400 aa).

Residue cysteine 90 is the Acyl-thioester intermediate of the active site. Residues histidine 356 and cysteine 386 each act as proton acceptor in the active site.

It belongs to the thiolase-like superfamily. Thiolase family.

The catalysed reaction is succinyl-CoA + acetyl-CoA = 3-oxoadipyl-CoA + CoA. The protein operates within aromatic compound metabolism; beta-ketoadipate pathway; acetyl-CoA and succinyl-CoA from 3-oxoadipate: step 2/2. Its function is as follows. Catalyzes thiolytic cleavage of beta-ketoadipyl-CoA to succinyl-CoA and acetyl-CoA. This chain is Beta-ketoadipyl-CoA thiolase (pcaF), found in Pseudomonas putida (Arthrobacter siderocapsulatus).